The primary structure comprises 87 residues: Acylphosphatase (87 aa).

Residues 1-87 (MAWVHGRVQG…EDYQDFRIRY (87 aa)) form the Acylphosphatase-like domain. Residues R14 and N32 contribute to the active site.

Belongs to the acylphosphatase family.

It carries out the reaction an acyl phosphate + H2O = a carboxylate + phosphate + H(+). The chain is Acylphosphatase (acyP) from Cronobacter sakazakii (strain ATCC BAA-894) (Enterobacter sakazakii).